The chain runs to 160 residues: Large ribosomal subunit protein eL14 (160 aa).

Residues Ser136 to Lys160 are disordered. Basic and acidic residues predominate over residues Asp146 to Lys160.

This sequence belongs to the eukaryotic ribosomal protein eL14 family.

This chain is Large ribosomal subunit protein eL14 (RpL14), found in Drosophila virilis (Fruit fly).